The chain runs to 253 residues: Ribosomal RNA small subunit methyltransferase J (253 aa).

S-adenosyl-L-methionine contacts are provided by residues 98–99 (RD), 114–115 (ER), 150–151 (SS), and Asp-172.

This sequence belongs to the methyltransferase superfamily. RsmJ family.

The protein resides in the cytoplasm. The catalysed reaction is guanosine(1516) in 16S rRNA + S-adenosyl-L-methionine = N(2)-methylguanosine(1516) in 16S rRNA + S-adenosyl-L-homocysteine + H(+). Specifically methylates the guanosine in position 1516 of 16S rRNA. In Shewanella pealeana (strain ATCC 700345 / ANG-SQ1), this protein is Ribosomal RNA small subunit methyltransferase J.